Consider the following 439-residue polypeptide: MQTQGEASNPLERNIELSVSREKVEAEVGVRLKRLAPKVKVQGFRPGKVPLKIVAQQYGHQVEHEVLGELLQQQFNDAVNQENYRVAGIPGFESRNSDANGATSYEFRATFEIYPDIELGDLSSITVNKPVLQIGDAEIQKTLDILRKQRATYEPTDRPAQTGDRVTIDYRGVLDGEGFPGGQADDYSVILGNGHLLEDFESSILGMTAGQEKTFDMTFPADYPGKDVAGKKVSFTIRLNKLEAPKLPEVDGEFAKSLGVAEGDIDKMRSEIKANLQREISQRIRTKLKEQVMQSLLDKVLIQVPKVLIRQEADRLAEEMQNSRAARGFRKDQSLSGDVFLEKAERRVRLGLILSKLIDTHELSVKPEQVRSFIEEYAQGYENPEQVIKWHYASPERLKEIEPLILEDNAVSWLLDKAKIIDQSVTFDELMGYSHATNV.

The PPIase FKBP-type domain maps to glycine 163–proline 248.

It belongs to the FKBP-type PPIase family. Tig subfamily.

The protein localises to the cytoplasm. The enzyme catalyses [protein]-peptidylproline (omega=180) = [protein]-peptidylproline (omega=0). Functionally, involved in protein export. Acts as a chaperone by maintaining the newly synthesized protein in an open conformation. Functions as a peptidyl-prolyl cis-trans isomerase. This is Trigger factor from Nitrosomonas europaea (strain ATCC 19718 / CIP 103999 / KCTC 2705 / NBRC 14298).